We begin with the raw amino-acid sequence, 1546 residues long: MKDSTEALNSIAFAVDTTLSSILPSSLAPPSAPPATSSFLKSIWYAFWWLWSMVVFKIMNIILLYIPSKIMNALSINFEITLNLSSILVALSAIITVCFLVVRYKYLTGYSKDTSDRKTKGKVNPSASNINLKNQSLDYVDQKKGHRRTTNYLDEFLSAIKVFGYLEKSVFHELTKNMTTQKLSHDEILYLDEKLGFSIVVEGVMQVYTRITENSNVSGGFDPDDDNELNYEKDDVLIIGNQRYQLLNEVKSGAPLSSLVSVLDLLKPVDSEDSTSDMLHSFNISDDDNISKIPEISPISLPFQGIHAGAKDDSVPPSPIIRPSKTKQLYPEIVARPKSRPHKEHTGHHLHHVHHSGATIAIIPYSAFQRVQSKYPKATSHIVTMVLARLYKVTFNTIHDYLGLTKEIMESEVKLNTTSSVRGANLPGYLFDGLLDKIYGANGINEASLSRKSDFQRASSVNLNKQKTTLCDAKSSRYVLLDSRLKSTHPGDLLSSVPLSRRSDYYQTHSHPLSADDPLVRSAFPSSKTLSSLSSPTSNLKRASSNLKFENIRDRSFSDDREETEETSLRIAVVESIFKILGISEKSTAMRNLSSFNSGRSSVSSSIVGLSNLMSADDKFDTNAARVRFDSYNGFSSTATSISRSSTPIKFYNTINQNQLHNHHMGDSVSGINISTLSRQHQANRNSSPTEFNFANVKSDFAKCLEIKSYGPNTTIVEQGSFNSGLYYVIDGSLDVLYRPSNHGEPSSNREDNLKKLYSVKSGGVAGYLSSVVGFRSLVTIRTSKKRGVIVAHISKSDYSKLMDRYYFLQLPVATKLKKLLSPQILTIDYALEWCHIPAGGVLCSQGDLANGFHIVLSGRFRVVRNKSDRYQGNTSDDDILGFSDTSMDCSPSSDINNEDLEVLGEYGHGESIGEVEVLTASRRTNSLIAVRDSETARIPRTLFEMLSLSNPSIMVKVSRIVASKVVYKDVLDQSSRNSTLIPSSTASHISNDYKTITILPTVSGLPVREFADKLVSALKAIGRNVIALDQASTLTHLGRHAFDERLAQLKLSGYFAYLEEEYETIVYICDTPLKSNWTSTCISQGDCILLLADAEDDVVATGIGDYERLLINLKTMARTDLCLLHPEKYVEPGSTSIWLKNRIWVQGHHHIEMEIIRKKDENSVKKRPNIISELASKIGSKTNPSIKSTLEDVRLKAISSFVKLNTSFVHSDRYKAVQPHKNDFLRLARILSNEAVGLVLGGGGSRGISHVGIVTALERHGIPVDLIGGTSIGSLVGGLYAKDYNIVSIYGRAKKFSKRVASLWRSVFDLTYPVTSYITGYEFNRGIWKIFGFTEIEDFWIRYFCNTTNITNSTMDIHESGYSWRFIRASMSLAGLLPPIAFQGCMLLDGGYLDNLPVSEMKKKGAKYIIAVDVGSADDRTPMNYGDTLSGFWVLFNRWNPFSKHPNVPNMMDIQMRLAYVASVNALEAAKKTNGVIYLRPPIDNYATLDFAKFDEIYHVGLNYADKLFSSWSKNGKLPAIAGMVDKAKIKSGDDKKVLYRRNSI.

The Cytoplasmic portion of the chain corresponds to 1-45 (MKDSTEALNSIAFAVDTTLSSILPSSLAPPSAPPATSSFLKSIWY). A helical transmembrane segment spans residues 46 to 66 (AFWWLWSMVVFKIMNIILLYI). The Lumenal portion of the chain corresponds to 67-81 (PSKIMNALSINFEIT). A helical transmembrane segment spans residues 82-102 (LNLSSILVALSAIITVCFLVV). Residues 103-1546 (RYKYLTGYSK…KKVLYRRNSI (1444 aa)) are Cytoplasmic-facing. Residues 689–820 (PTEF…LKKL) and 816–965 (KLKK…VASK) each bind a nucleoside 3',5'-cyclic phosphate. One can recognise a PNPLA domain in the interval 1239-1403 (LVLGGGGSRG…LDNLPVSEMK (165 aa)). Residues 1243–1248 (GGGSRG) carry the GXGXXG motif. A GXSXG motif is present at residues 1270-1274 (GTSIG). The active-site Nucleophile is the serine 1272. Catalysis depends on aspartate 1390, which acts as the Proton acceptor. Residues 1390–1392 (DGG) carry the DGA/G motif.

The protein belongs to the NTE family.

The protein localises to the endoplasmic reticulum membrane. It carries out the reaction a 1-acyl-sn-glycero-3-phosphocholine + H2O = sn-glycerol 3-phosphocholine + a fatty acid + H(+). Its activity is regulated as follows. Inhibited by organophosphorus esters. In terms of biological role, intracellular phospholipase B that catalyzes the double deacylation of phosphatidylcholine (PC) to glycerophosphocholine (GroPCho). Plays an important role in membrane lipid homeostasis. Responsible for the rapid PC turnover in response to inositol, elevated temperatures, or when choline is present in the growth medium. The sequence is that of Lysophospholipase NTE1 (NTE1) from Scheffersomyces stipitis (strain ATCC 58785 / CBS 6054 / NBRC 10063 / NRRL Y-11545) (Yeast).